Consider the following 106-residue polypeptide: UPF0145 protein CKL_2433 (106 aa).

Belongs to the UPF0145 family.

This Clostridium kluyveri (strain ATCC 8527 / DSM 555 / NBRC 12016 / NCIMB 10680 / K1) protein is UPF0145 protein CKL_2433.